A 155-amino-acid polypeptide reads, in one-letter code: Pathogenesis-related protein 2 (155 aa).

Belongs to the BetVI family.

In Phaseolus vulgaris (Kidney bean), this protein is Pathogenesis-related protein 2.